A 688-amino-acid polypeptide reads, in one-letter code: MSERKIPKEVIEEVERLREEIEYHNYRYYVLNDPVITDEEYDRLMRRLIELERMYPELVTPDSPTQRVGGKVLEGFKTVKHSVPMLSLDNTYNEEEILEFDRRVKKALQEAEVEYVAELKIDGVSIALRYENGRFVLGATRGDGIEGEDVSENVKTVRSIPLRLRKPVTIEVRGEIYMPVDEFKRLNDEREEEGLPPFANPRNAAAGTLRQLNTALVAARRLDSFIYYVVHPENYGLKTQWEALQFLKELGFKVNPHSRLCKNIQEVIDYWKEWKERKRELDYWVDGVVVKVNRFDFQRILGETSKAPRWAIAFKFPAEQARTRVLDVTIQVGRTGVLTPVAELEPVQLAGTIVKRASLHNFEYIREKDIRIGDYVFVEKAGGIIPQIVKSIPELRTGNEKEIKPPDKCPVCGGKVGKLNPDEVAIRCLNPHCPAKLKRALRTLVSREALDIEGLGEKLIDRLVDAGLIKDIADIFYLTPFDLAQLGPGIGQRTIAKILQEIEEAKKRPLHKLITGLGIPMVGQKTAKILAEHFKSLEAIADASYETLKDIPGIGPEIAKSIVEYFRNPKTREIIEKLKKAGVKLEEKVVKLDILRGLTFAVTGTLKNFTREEIIEFLEKLGAKVVNSVSRNTDYLIVGENPGSKYERAKMLKVKMMSEEEFLEFVRKRAELKGYNFDEIMRSWKEWS.

Residues 38–42, 87–88, and Glu-118 contribute to the NAD(+) site; these read DEEYD and SL. Lys-120 serves as the catalytic N6-AMP-lysine intermediate. Residues Arg-141, Glu-175, Lys-291, and Lys-315 each coordinate NAD(+). Residues Cys-409, Cys-412, Cys-428, and Cys-433 each contribute to the Zn(2+) site. The 90-residue stretch at 590–679 folds into the BRCT domain; the sequence is VKLDILRGLT…AELKGYNFDE (90 aa).

Belongs to the NAD-dependent DNA ligase family. LigA subfamily. Requires Mg(2+) as cofactor. Mn(2+) serves as cofactor.

The catalysed reaction is NAD(+) + (deoxyribonucleotide)n-3'-hydroxyl + 5'-phospho-(deoxyribonucleotide)m = (deoxyribonucleotide)n+m + AMP + beta-nicotinamide D-nucleotide.. In terms of biological role, DNA ligase that catalyzes the formation of phosphodiester linkages between 5'-phosphoryl and 3'-hydroxyl groups in double-stranded DNA using NAD as a coenzyme and as the energy source for the reaction. It is essential for DNA replication and repair of damaged DNA. The chain is DNA ligase from Thermotoga maritima (strain ATCC 43589 / DSM 3109 / JCM 10099 / NBRC 100826 / MSB8).